Reading from the N-terminus, the 201-residue chain is Cell division protein SepF (201 aa).

Residues 27–38 (VQERTSVQRDSR) are compositionally biased toward basic and acidic residues. Residues 27-99 (VQERTSVQRD…PRIQNKDSVR (73 aa)) are disordered. Polar residues-rich tracts occupy residues 43–54 (QEASQRSHMTNS) and 82–92 (DNSYQQATPRI).

This sequence belongs to the SepF family. In terms of assembly, homodimer. Interacts with FtsZ.

The protein resides in the cytoplasm. Functionally, cell division protein that is part of the divisome complex and is recruited early to the Z-ring. Probably stimulates Z-ring formation, perhaps through the cross-linking of FtsZ protofilaments. Its function overlaps with FtsA. The polypeptide is Cell division protein SepF (Streptococcus agalactiae serotype III (strain NEM316)).